A 1235-amino-acid chain; its full sequence is JNK-interacting protein 3 (1235 aa).

The segment at Met-1 to Tyr-22 is disordered. In terms of domain architecture, RH1 spans Glu-25–Ala-113. Residues Arg-84–Leu-184 are a coiled coil. The interval Gly-278 to Asn-325 is disordered. The segment covering Asp-282 to Pro-293 has biased composition (polar residues). Residues Gln-294–Pro-307 show a composition bias toward pro residues. Residues Gly-366 to Ala-493 are a coiled coil. Residues Arg-456–Ile-526 enclose the RH2 domain. Disordered stretches follow at residues Asn-520 to Ala-572, Lys-813 to Ala-852, and Pro-869 to Ser-897. Positions Gly-529–Ser-543 are enriched in gly residues. 2 stretches are compositionally biased toward low complexity: residues Pro-544–Ser-555 and Asn-821–Gln-830. Residues Arg-874–Ser-897 show a composition bias toward polar residues.

Belongs to the JIP scaffold family. Forms homo- and heterooligomeric complexes. Binds the TPR motif-containing C-terminal of kinesin light chain, Klc. Pre-assembled syd scaffolding complexes are then transported as a cargo of kinesin, to the required subcellular location.

The protein resides in the cytoplasm. In terms of biological role, the JNK-interacting protein (JIP) group of scaffold proteins selectively mediates JNK-signaling by aggregating specific components of the MAPK cascade to form a functional JNK signaling module. May function as a regulator of vesicle transport, through interactions with the JNK-signaling components and motor proteins. Syd is required for efficient kinesin-I mediated axonal transport. The sequence is that of JNK-interacting protein 3 from Drosophila pseudoobscura pseudoobscura (Fruit fly).